We begin with the raw amino-acid sequence, 354 residues long: Uroporphyrinogen decarboxylase (354 aa).

Substrate-binding positions include 27 to 31, aspartate 77, tyrosine 154, serine 209, and histidine 327; that span reads RQAGR.

This sequence belongs to the uroporphyrinogen decarboxylase family. As to quaternary structure, homodimer.

The protein localises to the cytoplasm. It carries out the reaction uroporphyrinogen III + 4 H(+) = coproporphyrinogen III + 4 CO2. It functions in the pathway porphyrin-containing compound metabolism; protoporphyrin-IX biosynthesis; coproporphyrinogen-III from 5-aminolevulinate: step 4/4. In terms of biological role, catalyzes the decarboxylation of four acetate groups of uroporphyrinogen-III to yield coproporphyrinogen-III. The polypeptide is Uroporphyrinogen decarboxylase (Shewanella baltica (strain OS185)).